The chain runs to 41 residues: Conotoxin Bu22 (41 aa).

A propeptide spanning residues 1–25 is cleaved from the precursor; it reads SDRASDGRNAAANDRASDLVALTVR. Intrachain disulfides connect Cys27–Cys33 and Cys28–Cys40.

The protein belongs to the conotoxin A superfamily. Expressed by the venom duct.

Its subcellular location is the secreted. The protein is Conotoxin Bu22 of Conus bullatus (Bubble cone).